The following is a 578-amino-acid chain: Endonuclease GajA (578 aa).

Residues 1-341 (MKFSNITIKN…RLIRVHSTEK (341 aa)) form an ATPase domain region. 32–36 (DIGKT) is a binding site for ATP. Residues 370–510 (LFAERVLLIE…LGERIYLSEI (141 aa)) form a toprim domain region. 5 residues coordinate a divalent metal cation: Glu-379, Glu-383, Asp-463, Glu-464, and Glu-513.

As to quaternary structure, homotetramer. Forms the core of the anti-phage defense complex. Interacts with GajB; 2 GajB dimers dock at opposite sides of the GajA complex to form a 4:4 GajA-GajB assembly (GajAB). GajAB interacts with Bacillus phage Phi3T Gad1 protein; this interaction forms a 4:4:8 GajAB-Gad1 complex and leads to GajAB inhibition. Mg(2+) is required as a cofactor. It depends on Mn(2+) as a cofactor.

Its activity is regulated as follows. Endonuclease activity inhibited by all NTPs, dNTPs, NDPs (at 0.5 mM, UDP not tested) and AMP-PNP; not inhibited by any tested NMP, dNMP or nucleoside. Inhibited by 100 mM NaCl, 100 mM KCl, 0.5 mM Co(2+) and 0.5 mM Ni(2+). In terms of biological role, component of antiviral defense system Gabija type I, composed of GajA and GajB. Endonuclease that nicks double-stranded DNA within the sequence 5'-TNNNCGGGNNA-3' in the absence of nucleotides (NTP, dNTP and NDPs), cleaving after C-1. Has no detected ATPase activity. Expression of Gabija type I in B.subtilis (strain BEST7003) confers resistance to phages phi105, phi29, rho14, SpBeta and SBSphiC. Expression of Gabija type I in E.coli B (strain ATCC 11303) confers resistance to phage T7. It is thought that this enzyme is strongly suppressed during physiological growth (in E.coli total nucleotide concentration is over 8.7 mM in mid-log phase), but during viral replication, when nucleotides are rapidly consumed, it is de-suppressed and degrades target DNA. In Bacillus cereus (strain VD045), this protein is Endonuclease GajA.